The chain runs to 246 residues: Acetoacetate decarboxylase (246 aa).

The active-site Schiff-base intermediate with acetoacetate is the lysine 116.

The protein belongs to the ADC family.

It catalyses the reaction acetoacetate + H(+) = acetone + CO2. Its function is as follows. Catalyzes the conversion of acetoacetate to acetone and carbon dioxide. The polypeptide is Acetoacetate decarboxylase (Burkholderia ambifaria (strain MC40-6)).